An 81-amino-acid polypeptide reads, in one-letter code: Large ribosomal subunit protein bL31B (81 aa).

The protein belongs to the bacterial ribosomal protein bL31 family. Type B subfamily. As to quaternary structure, part of the 50S ribosomal subunit.

The polypeptide is Large ribosomal subunit protein bL31B (Borreliella afzelii (strain PKo) (Borrelia afzelii)).